Reading from the N-terminus, the 82-residue chain is Small ribosomal subunit protein uS17 (82 aa).

The protein belongs to the universal ribosomal protein uS17 family. Part of the 30S ribosomal subunit.

In terms of biological role, one of the primary rRNA binding proteins, it binds specifically to the 5'-end of 16S ribosomal RNA. The polypeptide is Small ribosomal subunit protein uS17 (Rhodopseudomonas palustris (strain HaA2)).